The chain runs to 246 residues: E3 ubiquitin-protein ligase MARCHF2 (246 aa).

Residues 56-116 form an RING-CH-type zinc finger; sequence DSQSDCPFCR…ELCHTEFAVE (61 aa). Positions 64, 67, 80, 82, 90, 93, 106, and 109 each coordinate Zn(2+). A required for interaction with IKBKG region spans residues 121 to 246; that stretch reads PLTEWLKDPG…LKKVAEETPV (126 aa). A run of 2 helical transmembrane segments spans residues 138-158 and 175-195; these read LCCD…SGWL and AVGL…WTLV.

Interacts with STX6; the interaction promotes MARCHF2-mediated ubiquitination and degradation of CFTR. Interacts with MARCHF3. Interacts with GOPC/CAL; the interaction leads to CFTR ubiquitination and degradation. Interacts with CFTR; the interaction leads to CFTR ubiqtuitination and degradation. Interacts (via PDZ domain) with DLG1 (via PDZ domains); the interaction leads to DLG1 ubiqtuitination and degradation. Interacts with ERGIC3. Interacts with ADRB2. Interacts with IKBKG/NEMO; during the late stages of macrophage viral and bacterial infection; the interaction leads to ubiquitination and degradation of IKBKG/NEMO.

Its subcellular location is the endoplasmic reticulum membrane. The protein localises to the lysosome membrane. It localises to the endosome membrane. The protein resides in the golgi apparatus membrane. It is found in the cytoplasm. Its subcellular location is the cell membrane. It catalyses the reaction S-ubiquitinyl-[E2 ubiquitin-conjugating enzyme]-L-cysteine + [acceptor protein]-L-lysine = [E2 ubiquitin-conjugating enzyme]-L-cysteine + N(6)-ubiquitinyl-[acceptor protein]-L-lysine.. Its pathway is protein modification; protein ubiquitination. Its function is as follows. E3 ubiquitin-protein ligase that may mediate ubiquitination of TFRC and CD86, and promote their subsequent endocytosis and sorting to lysosomes via multivesicular bodies. E3 ubiquitin ligases accept ubiquitin from an E2 ubiquitin-conjugating enzyme in the form of a thioester and then directly transfer the ubiquitin to targeted substrates. Together with GOPC/CAL mediates the ubiquitination and lysosomal degradation of CFTR. Ubiquitinates and therefore mediates the degradation of DLG1. Regulates the intracellular trafficking and secretion of alpha1-antitrypsin/SERPINA1 and HP/haptoglobin via ubiquitination and degradation of the cargo receptor ERGIC3. Negatively regulates the antiviral and antibacterial immune response by repression of the NF-kB and type 1 IFN signaling pathways, via MARCHF2-mediated K48-linked polyubiquitination of IKBKG/NEMO, resulting in its proteasomal degradation. May be involved in endosomal trafficking through interaction with STX6. The protein is E3 ubiquitin-protein ligase MARCHF2 (Marchf2) of Mus musculus (Mouse).